An 819-amino-acid polypeptide reads, in one-letter code: Leucine--tRNA ligase (819 aa).

Residues 40–51 (PYPSGAGLHVGH) carry the 'HIGH' region motif. The 'KMSKS' region motif lies at 600–604 (KMSKS). K603 lines the ATP pocket.

It belongs to the class-I aminoacyl-tRNA synthetase family.

It localises to the cytoplasm. The catalysed reaction is tRNA(Leu) + L-leucine + ATP = L-leucyl-tRNA(Leu) + AMP + diphosphate. This Chlamydia muridarum (strain MoPn / Nigg) protein is Leucine--tRNA ligase.